Here is a 151-residue protein sequence, read N- to C-terminus: 3-hydroxyacyl-[acyl-carrier-protein] dehydratase FabZ (151 aa).

Histidine 54 is a catalytic residue.

Belongs to the thioester dehydratase family. FabZ subfamily.

It is found in the cytoplasm. It carries out the reaction a (3R)-hydroxyacyl-[ACP] = a (2E)-enoyl-[ACP] + H2O. Its function is as follows. Involved in unsaturated fatty acids biosynthesis. Catalyzes the dehydration of short chain beta-hydroxyacyl-ACPs and long chain saturated and unsaturated beta-hydroxyacyl-ACPs. This Salmonella agona (strain SL483) protein is 3-hydroxyacyl-[acyl-carrier-protein] dehydratase FabZ.